The following is an 894-amino-acid chain: Histone-lysine N-methyltransferase EZ2 (894 aa).

A compositionally biased stretch (low complexity) spans 1–11 (MASSSKASDSS). Disordered stretches follow at residues 1–25 (MASSSKASDSSQRSKRSDQGMGKDA), 395–447 (SSVS…KRQK), and 491–513 (KKTSRKDMCGESPATTMENVGRQ). Polar residues predominate over residues 395-421 (SSVSAEESTTTPSADISETENVSSDLP). Basic residues predominate over residues 425–435 (LRKHKISKHGP). Residues 503–513 (PATTMENVGRQ) are compositionally biased toward polar residues. The region spanning 527–577 (TLSCWSALERDLYLKGIEIFGKNSCLIARNLLSGLKTCIEVANYMYNNGAA) is the SANT domain. The CXC domain occupies 627–731 (AGHPTVRKRT…SLGEPLARGD (105 aa)). One can recognise an SET domain in the interval 746–861 (QRILLGRSDV…ASEELFYDYR (116 aa)). The segment at 867–894 (APAWARRPEGSKKDEASVSHRRAHKVAR) is disordered. Residues 872 to 884 (RRPEGSKKDEASV) are compositionally biased toward basic and acidic residues. Basic residues predominate over residues 885–894 (SHRRAHKVAR).

It belongs to the class V-like SAM-binding methyltransferase superfamily. Histone-lysine methyltransferase family. EZ subfamily.

It is found in the nucleus. It catalyses the reaction L-lysyl(27)-[histone H3] + 3 S-adenosyl-L-methionine = N(6),N(6),N(6)-trimethyl-L-lysyl(27)-[histone H3] + 3 S-adenosyl-L-homocysteine + 3 H(+). Functionally, polycomb group (PcG) protein. Catalytic subunit of some PcG multiprotein complex, which methylates 'Lys-27' of histone H3, leading to transcriptional repression of the affected target genes. PcG proteins are not required to initiate repression, but to maintain it during later stages of development. In Zea mays (Maize), this protein is Histone-lysine N-methyltransferase EZ2 (EZ2).